A 144-amino-acid chain; its full sequence is Transcription antitermination protein NusB (144 aa).

It belongs to the NusB family.

Its function is as follows. Involved in transcription antitermination. Required for transcription of ribosomal RNA (rRNA) genes. Binds specifically to the boxA antiterminator sequence of the ribosomal RNA (rrn) operons. This Buchnera aphidicola subsp. Baizongia pistaciae (strain Bp) protein is Transcription antitermination protein NusB.